Here is an 86-residue protein sequence, read N- to C-terminus: Stage V sporulation protein S (86 aa).

Its function is as follows. Interferes with sporulation at an early stage. Seems to play a positive role in allowing cells to progress beyond stage V of sporulation. The polypeptide is Stage V sporulation protein S (Bacillus subtilis (strain 168)).